A 151-amino-acid chain; its full sequence is Small ribosomal subunit protein uS11 (151 aa).

The disordered stretch occupies residues Asp-131–Leu-151. The segment covering Arg-142–Leu-151 has biased composition (basic residues).

The protein belongs to the universal ribosomal protein uS11 family.

The sequence is that of Small ribosomal subunit protein uS11 from Bombyx mori (Silk moth).